The chain runs to 234 residues: tRNA1(Val) (adenine(37)-N6)-methyltransferase (234 aa).

This sequence belongs to the methyltransferase superfamily. tRNA (adenine-N(6)-)-methyltransferase family.

It is found in the cytoplasm. The enzyme catalyses adenosine(37) in tRNA1(Val) + S-adenosyl-L-methionine = N(6)-methyladenosine(37) in tRNA1(Val) + S-adenosyl-L-homocysteine + H(+). Specifically methylates the adenine in position 37 of tRNA(1)(Val) (anticodon cmo5UAC). The protein is tRNA1(Val) (adenine(37)-N6)-methyltransferase of Pedobacter heparinus (strain ATCC 13125 / DSM 2366 / CIP 104194 / JCM 7457 / NBRC 12017 / NCIMB 9290 / NRRL B-14731 / HIM 762-3).